The following is a 122-amino-acid chain: Large ribosomal subunit protein uL14c (122 aa).

It belongs to the universal ribosomal protein uL14 family. In terms of assembly, part of the 50S ribosomal subunit.

The protein resides in the plastid. Its subcellular location is the chloroplast. Functionally, binds to 23S rRNA. This chain is Large ribosomal subunit protein uL14c, found in Acorus calamus (Sweet flag).